The following is a 146-amino-acid chain: Large-conductance mechanosensitive channel (146 aa).

The next 3 helical transmembrane spans lie at 21 to 41 (VGII…ADLI), 44 to 64 (IIGL…LGDG), and 83 to 103 (GSFI…FLLV).

It belongs to the MscL family. As to quaternary structure, homopentamer.

The protein resides in the cell inner membrane. Functionally, channel that opens in response to stretch forces in the membrane lipid bilayer. May participate in the regulation of osmotic pressure changes within the cell. The chain is Large-conductance mechanosensitive channel from Cereibacter sphaeroides (strain ATCC 17029 / ATH 2.4.9) (Rhodobacter sphaeroides).